A 141-amino-acid chain; its full sequence is Galactose-6-phosphate isomerase subunit LacA (141 aa).

It belongs to the LacAB/RpiB family. In terms of assembly, heteromultimeric protein consisting of LacA and LacB.

It carries out the reaction aldehydo-D-galactose 6-phosphate = keto-D-tagatose 6-phosphate. Its pathway is carbohydrate metabolism; D-galactose 6-phosphate degradation; D-tagatose 6-phosphate from D-galactose 6-phosphate: step 1/1. The chain is Galactose-6-phosphate isomerase subunit LacA from Streptococcus pneumoniae (strain 70585).